A 266-amino-acid chain; its full sequence is ATP synthase subunit a (266 aa).

A run of 6 helical transmembrane segments spans residues Lys-38–Ala-58, Leu-99–Ile-119, His-126–Ile-146, Gly-162–Val-182, Leu-191–Tyr-211, and Ser-224–Leu-244.

It belongs to the ATPase A chain family. F-type ATPases have 2 components, CF(1) - the catalytic core - and CF(0) - the membrane proton channel. CF(1) has five subunits: alpha(3), beta(3), gamma(1), delta(1), epsilon(1). CF(0) has three main subunits: a(1), b(2) and c(9-12). The alpha and beta chains form an alternating ring which encloses part of the gamma chain. CF(1) is attached to CF(0) by a central stalk formed by the gamma and epsilon chains, while a peripheral stalk is formed by the delta and b chains.

It is found in the cell membrane. Key component of the proton channel; it plays a direct role in the translocation of protons across the membrane. This is ATP synthase subunit a from Pseudarthrobacter chlorophenolicus (strain ATCC 700700 / DSM 12829 / CIP 107037 / JCM 12360 / KCTC 9906 / NCIMB 13794 / A6) (Arthrobacter chlorophenolicus).